Here is a 385-residue protein sequence, read N- to C-terminus: Tryptophan--tRNA ligase (385 aa).

The 'HIGH' region motif lies at 82–90 (PSGPMHIGH). The 'KMSKS' region motif lies at 253–257 (KMSAS).

The protein belongs to the class-I aminoacyl-tRNA synthetase family.

The protein resides in the cytoplasm. The catalysed reaction is tRNA(Trp) + L-tryptophan + ATP = L-tryptophyl-tRNA(Trp) + AMP + diphosphate + H(+). The polypeptide is Tryptophan--tRNA ligase (Pyrococcus abyssi (strain GE5 / Orsay)).